The primary structure comprises 237 residues: 7-cyano-7-deazaguanine synthase (237 aa).

14–24 (FSGGQDSATCL) is an ATP binding site. Residues Cys202, Cys217, Cys220, and Cys223 each coordinate Zn(2+).

It belongs to the QueC family. Zn(2+) is required as a cofactor.

It catalyses the reaction 7-carboxy-7-deazaguanine + NH4(+) + ATP = 7-cyano-7-deazaguanine + ADP + phosphate + H2O + H(+). Its pathway is purine metabolism; 7-cyano-7-deazaguanine biosynthesis. In terms of biological role, catalyzes the ATP-dependent conversion of 7-carboxy-7-deazaguanine (CDG) to 7-cyano-7-deazaguanine (preQ(0)). The chain is 7-cyano-7-deazaguanine synthase from Rhodopseudomonas palustris (strain ATCC BAA-98 / CGA009).